A 90-amino-acid chain; its full sequence is Small ribosomal subunit protein uS15 (90 aa).

It belongs to the universal ribosomal protein uS15 family. In terms of assembly, part of the 30S ribosomal subunit. Forms a bridge to the 50S subunit in the 70S ribosome, contacting the 23S rRNA.

One of the primary rRNA binding proteins, it binds directly to 16S rRNA where it helps nucleate assembly of the platform of the 30S subunit by binding and bridging several RNA helices of the 16S rRNA. Its function is as follows. Forms an intersubunit bridge (bridge B4) with the 23S rRNA of the 50S subunit in the ribosome. This Campylobacter jejuni subsp. doylei (strain ATCC BAA-1458 / RM4099 / 269.97) protein is Small ribosomal subunit protein uS15.